Reading from the N-terminus, the 455-residue chain is Golgi pH regulator (455 aa).

5 consecutive transmembrane segments (helical) span residues 5-25, 46-66, 79-99, 114-134, and 150-170; these read IDSS…WLFF, VTFA…LGVL, LCVI…YFIV, CLLW…FPIL, and VGVI…VNCP. N180 is a glycosylation site (N-linked (GlcNAc...) asparagine). A run of 4 helical transmembrane segments spans residues 288–308, 343–363, 378–398, and 425–445; these read FLGY…TINI, ISFI…LITL, VIVL…VLLI, and WFDV…YLAH.

It belongs to the Golgi pH regulator (TC 1.A.38) family. In terms of assembly, homotrimer. Interacts with RABL3; the interaction stabilizes GPR89.

It is found in the golgi apparatus membrane. It carries out the reaction iodide(out) = iodide(in). The enzyme catalyses chloride(in) = chloride(out). The catalysed reaction is bromide(in) = bromide(out). It catalyses the reaction fluoride(in) = fluoride(out). Voltage-gated channel that enables the transfer of monoatomic anions such as iodide, chloride, bromide and fluoride which may function in counter-ion conductance and participates in Golgi acidification. Plays a role in lymphocyte development, probably by acting as a RABL3 effector in hematopoietic cells. In Mus musculus (Mouse), this protein is Golgi pH regulator.